A 362-amino-acid polypeptide reads, in one-letter code: CLIP domain-containing serine protease B10 (362 aa).

The first 19 residues, 1-19 (MAKVVDCVLLLAFIAVVRG), serve as a signal peptide directing secretion. The Clip domain occupies 22–75 (ACRTPDHRDGVCHPVQQCPSVRDEFFNSDRVLSEDEIDYLRKLQCKTKDVTICC). Cystine bridges form between Cys-23–Cys-74, Cys-33–Cys-66, and Cys-39–Cys-75. The Peptidase S1 domain maps to 110–361 (IIGGNYTAID…YLDWIRQNIR (252 aa)). An N-linked (GlcNAc...) asparagine glycan is attached at Asn-114. Cys-140 and Cys-156 are joined by a disulfide. Residues His-155 and Asp-220 each act as charge relay system in the active site. A glycan (N-linked (GlcNAc...) asparagine) is linked at Asn-254. 2 cysteine pairs are disulfide-bonded: Cys-285–Cys-300 and Cys-310–Cys-337. The active-site Charge relay system is the Ser-314.

It belongs to the peptidase S1 family. CLIP subfamily. Forms a covalent heterodimer with SRPN2; the interaction inhibits CLIPB10 catalytic activity. In terms of processing, cleaved by an unknown protease into an active form.

It is found in the secreted. Inhibited by serpin SRPN2. Its function is as follows. Serine protease which preferentially cleaves after arginine residues. Involved in the innate immune response against parasite P.bergei infection by activating the melanization cascade. Probably in the hemolymph, cleaves and activates prophenoloxidase (PPO), which functions in the formation of pigments such as melanin and other polyphenolic compounds. In the susceptible strain G3, appears to be dispensable for ookinete elimination which occurs by lysis. The chain is CLIP domain-containing serine protease B10 from Anopheles gambiae (African malaria mosquito).